The sequence spans 714 residues: MEMTSAFTLNVRLDNIAVITIDVPGEKMNTLKAEFASQVRAIIKQLRENKELRGVVFVSAKPDNFIAGADINMIGNCKTAQEAEALARQGQQLMAEIHALPIPVIAAIHGACLGGGLELALACHGRVCTDDPKTVLGLPEVQLGLLPGSGGTQRLPRLIGVSTALEMILTGKQLRAKQALKLGLVDDVVPHSILLEVAVELAKKDRPSSRPLPVRERILAGPLGRALLFKMVGKKTEHKTQGNYPATERILEVVETGLAQGTSSGYDAEARAFGELAMTPQSQALRSIFFASTDVKKDPGSDAPPAPLNSVGILGGGLMGGGIAYVTACKAGLPVRIKDINPQGINHALKYSWDQLEGKVRRRHLKASERDKQLALISGTTDYRGFAHRDLIIEAVFENLELKQQMVAEVEQNSAAHTIFASNTSSLPIGDIAAHATRPEQVIGLHFFSPVEKMPLVEIIPHAGTSAQTIATTVKLAKKQGKTPIVVRDKAGFYVNRILAPYINEAIRMLTEGERVEHIDAALVKFGFPVGPIQLLDEVGIDTGTKIIPVLEAAYGERFSAPANVVSSILNDDRKGRKNGRGFYLYGQKGRKSKKQVDPAIYPLIGAQGQGRLSAPQVAERCVMLMLNEAVRCVDEQVIRSVRDGDIGAVFGIGFPPFLGGPFRYIDSLGAGEVVAIMQRLATQYGSRFTPCERLVEMGARGESFWKTTATDLQ.

The tract at residues 1 to 190 is enoyl-CoA hydratase; sequence MEMTSAFTLN…KLGLVDDVVP (190 aa). Positions 306-714 are 3-hydroxyacyl-CoA dehydrogenase; that stretch reads APLNSVGILG…FWKTTATDLQ (409 aa).

This sequence in the N-terminal section; belongs to the enoyl-CoA hydratase/isomerase family. It in the central section; belongs to the 3-hydroxyacyl-CoA dehydrogenase family. As to quaternary structure, heterotetramer of two alpha chains (FadJ) and two beta chains (FadI).

It localises to the cytoplasm. It catalyses the reaction a (3S)-3-hydroxyacyl-CoA = a (2E)-enoyl-CoA + H2O. The enzyme catalyses a 4-saturated-(3S)-3-hydroxyacyl-CoA = a (3E)-enoyl-CoA + H2O. The catalysed reaction is a (3S)-3-hydroxyacyl-CoA + NAD(+) = a 3-oxoacyl-CoA + NADH + H(+). It carries out the reaction (3S)-3-hydroxybutanoyl-CoA = (3R)-3-hydroxybutanoyl-CoA. Its pathway is lipid metabolism; fatty acid beta-oxidation. Catalyzes the formation of a hydroxyacyl-CoA by addition of water on enoyl-CoA. Also exhibits 3-hydroxyacyl-CoA epimerase and 3-hydroxyacyl-CoA dehydrogenase activities. This Escherichia coli O8 (strain IAI1) protein is Fatty acid oxidation complex subunit alpha.